The chain runs to 549 residues: Arginine--tRNA ligase (549 aa).

The short motif at 122-132 (ANPTGFLHLGH) is the 'HIGH' region element.

It belongs to the class-I aminoacyl-tRNA synthetase family. As to quaternary structure, monomer.

The protein localises to the cytoplasm. It carries out the reaction tRNA(Arg) + L-arginine + ATP = L-arginyl-tRNA(Arg) + AMP + diphosphate. The protein is Arginine--tRNA ligase of Mycoplasmoides gallisepticum (strain R(low / passage 15 / clone 2)) (Mycoplasma gallisepticum).